We begin with the raw amino-acid sequence, 870 residues long: Patatin-like phospholipase domain-containing protein NCU11180 (870 aa).

2 disordered regions span residues 1-24 and 131-158; these read MADD…PPEA and KVIK…KGVA. Over residues 131–141 the composition is skewed to basic and acidic residues; it reads KVIKTDRDEKR. Basic residues predominate over residues 142-155; sequence NKRGKDRKNKKPRK. The chain crosses the membrane as a helical span at residues 183 to 203; sequence WPFLLFVSFWIVGLGMAYLAT. The tract at residues 281–320 is disordered; it reads EEVERELESQSQNSDSGVASGEETSNTKAGGGNNGNDKKT. Residues 289–308 are compositionally biased toward polar residues; sequence SQSQNSDSGVASGEETSNTK. Positions 399–590 constitute a PNPLA domain; that stretch reads LCLSGGATFA…RTDIPIKSLN (192 aa). A GXSXG motif is present at residues 430–434; it reads GTSGG. The active-site Nucleophile is Ser-432. Residue Asp-577 is the Proton acceptor of the active site. 2 disordered regions span residues 735–786 and 804–870; these read RRET…DRRG and GREG…HSRT. The segment covering 818-834 has biased composition (acidic residues); it reads TEDELTMTELEGEDDDG.

Belongs to the PLPL family.

It is found in the membrane. Probable lipid hydrolase. The chain is Patatin-like phospholipase domain-containing protein NCU11180 from Neurospora crassa (strain ATCC 24698 / 74-OR23-1A / CBS 708.71 / DSM 1257 / FGSC 987).